A 376-amino-acid chain; its full sequence is UPF0284 protein glr4139 (376 aa).

Belongs to the UPF0284 family.

The protein is UPF0284 protein glr4139 of Gloeobacter violaceus (strain ATCC 29082 / PCC 7421).